Consider the following 554-residue polypeptide: Phosphomethylpyrimidine synthase (554 aa).

Substrate contacts are provided by residues asparagine 188, methionine 217, tyrosine 246, histidine 282, 302-304 (SRG), 343-346 (DGLR), and glutamate 382. Residue histidine 386 coordinates Zn(2+). A substrate-binding site is contributed by tyrosine 409. Histidine 450 is a Zn(2+) binding site. Cysteine 530, cysteine 533, and cysteine 538 together coordinate [4Fe-4S] cluster.

It belongs to the ThiC family. In terms of assembly, homodimer. The cofactor is [4Fe-4S] cluster.

It carries out the reaction 5-amino-1-(5-phospho-beta-D-ribosyl)imidazole + S-adenosyl-L-methionine = 4-amino-2-methyl-5-(phosphooxymethyl)pyrimidine + CO + 5'-deoxyadenosine + formate + L-methionine + 3 H(+). The protein operates within cofactor biosynthesis; thiamine diphosphate biosynthesis. Its function is as follows. Catalyzes the synthesis of the hydroxymethylpyrimidine phosphate (HMP-P) moiety of thiamine from aminoimidazole ribotide (AIR) in a radical S-adenosyl-L-methionine (SAM)-dependent reaction. The polypeptide is Phosphomethylpyrimidine synthase (Coxiella burnetii (strain Dugway 5J108-111)).